Consider the following 337-residue polypeptide: 2-oxoglutarate receptor 1 (337 aa).

At 1–37 (MIETLDSPANDSDFLDYITALENCTDEQISFKMQYLP) the chain is on the extracellular side. The N-linked (GlcNAc...) asparagine glycan is linked to Asn-23. The chain crosses the membrane as a helical span at residues 38 to 58 (VIYSIIFLVGFPGNTVAISIY). Over 59 to 69 (VFKMRPWKSST) the chain is Cytoplasmic. A helical membrane pass occupies residues 70-90 (IIMLNLALTDLLYLTSLPFLI). Residues 91-116 (HYYASGENWIFGDFMCKFIRFGFHFN) lie on the Extracellular side of the membrane. Cys-106 and Cys-183 are joined by a disulfide. A helical membrane pass occupies residues 117-137 (LYSSILFLTCFSLFRYIVIIH). Over 138–151 (PMSCFSIQKTRWAV) the chain is Cytoplasmic. Residues 152-172 (VACAGVWVISLVAVMPMTFLI) form a helical membrane-spanning segment. Residues 173–200 (TSTTRTNRSACLDLTSSDDLTTIKWYNL) are Extracellular-facing. Residues 201-221 (ILTATTFCLPLLIVTLCYTTI) form a helical membrane-spanning segment. At 222–242 (ISTLTHGPRTHSCFKQKARRL) the chain is on the cytoplasmic side. The chain crosses the membrane as a helical span at residues 243–263 (TILLLLVFYVCFLPFHILRVI). Topologically, residues 264–284 (RIESRLLSISCSIESHIHEAY) are extracellular. Residues 285-305 (IVSRPLAALNTFGNLLLYVVV) form a helical membrane-spanning segment. Residues 306 to 337 (SNNFQQAFCSAVRCKAIGDLEQAKKDSCSNNP) are Cytoplasmic-facing.

The protein belongs to the G-protein coupled receptor 1 family. In terms of tissue distribution, highly expressed in mast cells and is found predominantly in the tissues of the respiratory tract and kidneys.

It is found in the cell membrane. G protein-coupled receptor for dicarboxylates and amino dicarboxylates. Receptor for itaconate, a metabolite produced by myeloid lineages. In the respiratory epithelium, couples the binding of itaconate to the activation of GNA11 and downstream intracellular Ca(2+) release, leading to mucocilliary clearance of airborne pathogens. Receptor for leukotriene E4 (LTE4) produced by mast cells upon allergic inflammation. Binds with high affinity to LTE4 and elicits mucin release from pulmonary epithelium in response to airborne fungi allergens. Regulates mucin-producing goblet cell homeostasis. Receptor for alpha-ketoglutarate produced by proximal tubule renal cells upon metabolic alkalosis. In an intrarenal paracrine signaling pathway, binds alpha-ketoglutarate and drives transepithelial salt reabsorption and bicarbonate secretion by SLC26A4/pendrin-positive intercalated cells. This Rattus norvegicus (Rat) protein is 2-oxoglutarate receptor 1 (Oxgr1).